Reading from the N-terminus, the 294-residue chain is Elongation factor Ts (294 aa).

The interval 80–83 (TDFV) is involved in Mg(2+) ion dislocation from EF-Tu.

This sequence belongs to the EF-Ts family.

It is found in the cytoplasm. Associates with the EF-Tu.GDP complex and induces the exchange of GDP to GTP. It remains bound to the aminoacyl-tRNA.EF-Tu.GTP complex up to the GTP hydrolysis stage on the ribosome. The sequence is that of Elongation factor Ts from Polynucleobacter asymbioticus (strain DSM 18221 / CIP 109841 / QLW-P1DMWA-1) (Polynucleobacter necessarius subsp. asymbioticus).